Reading from the N-terminus, the 492-residue chain is Replication factor C large subunit (492 aa).

46-53 (GPPGSGKT) contributes to the ATP binding site. Residues 445–492 (VIPKRPKISDNQISEILTKDNNPKDDVKKASKKPESTSKKQATLDKFF) form a disordered region. Over residues 461–482 (LTKDNNPKDDVKKASKKPESTS) the composition is skewed to basic and acidic residues.

The protein belongs to the activator 1 small subunits family. RfcL subfamily. Heteromultimer composed of small subunits (RfcS) and large subunits (RfcL).

Its function is as follows. Part of the RFC clamp loader complex which loads the PCNA sliding clamp onto DNA. In Methanococcus vannielii (strain ATCC 35089 / DSM 1224 / JCM 13029 / OCM 148 / SB), this protein is Replication factor C large subunit.